The primary structure comprises 482 residues: Lipoamide acyltransferase component of branched-chain alpha-keto acid dehydrogenase complex, mitochondrial (482 aa).

The N-terminal 61 residues, 1 to 61, are a transit peptide targeting the mitochondrion; it reads MAAARVLRTW…HSLRTAAVLQ (61 aa). One can recognise a Lipoyl-binding domain in the interval 64-139; sequence VVQFKLSDIG…YVGKPLIDIE (76 aa). N6-lipoyllysine is present on K105. Position 133 is an N6-succinyllysine (K133). Positions 145 to 160 are critical for association with PPM1K; that stretch reads DSEEDVVETPAVSHDE. In terms of domain architecture, Peripheral subunit-binding (PSBD) spans 172-209; the sequence is LATPAVRRLAMENNIKLSEVVGSGKDGRILKEDILSFL. K196 is modified (N6-acetyllysine; alternate). K196 carries the N6-succinyllysine; alternate modification. K202 bears the N6-acetyllysine mark. The disordered stretch occupies residues 217–252; sequence LPPSPKSEITPPPPQPKDRTFPTPIAKPPVFTGKDR. The segment covering 218-231 has biased composition (pro residues); sequence PPSPKSEITPPPPQ. S220 carries the phosphoserine modification. N6-acetyllysine is present on residues K243 and K250. At K261 the chain carries N6-succinyllysine. K289 carries the post-translational modification N6-acetyllysine; alternate. K289 carries the N6-succinyllysine; alternate modification. R291 contacts CoA. Residues K295 and K304 each carry the N6-acetyllysine modification. Positions 306, 349, 378, 399, 400, 403, 424, and 426 each coordinate CoA. K435 is modified (N6-acetyllysine). Position 440 is an N6-acetyllysine; alternate (K440). The residue at position 440 (K440) is an N6-succinyllysine; alternate. Active-site residues include H452 and D456.

This sequence belongs to the 2-oxoacid dehydrogenase family. In terms of assembly, forms a 24-polypeptide structural core with octahedral symmetry that represents the E2 component of the branched-chain alpha-ketoacid dehydrogenase (BCKDH) complex. The BCKDH complex is composed of three major building blocks E1, E2 and E3. It is organized around E2, a 24-meric cubic core composed of DBT, to which are associated 6 to 12 copies of E1, and approximately 6 copies of the dehydrogenase E3, a DLD dimer. Interacts with PPM1K with a 24:1 stoichiometry; the N-terminal region (residues 49-61) of PPM1K and C-terminal linker of the lipoyl domain of DBT/E2 (residues 145-160) are critical for this interaction whereas the lipoyl prosthetic group is dispensable. This interaction requires colocalization in mitochondria. PPM1K competes with BCKDK for binding to DBT; this interaction is modulated by branched-chain alpha-keto acids (BCKAs). At steady state, BCKDH holoenzyme preferentially binds BCKDK and BCKDHA is phosphorylated. In response to high levels of BCKAs, BCKDK is replaced by PPM1K leading to BCKDHA dephosphorylation. (R)-lipoate serves as cofactor.

The protein localises to the mitochondrion matrix. It carries out the reaction N(6)-[(R)-dihydrolipoyl]-L-lysyl-[protein] + 2-methylpropanoyl-CoA = N(6)-[(R)-S(8)-2-methylpropanoyldihydrolipoyl]-L-lysyl-[protein] + CoA. The branched-chain alpha-keto dehydrogenase complex catalyzes the overall conversion of alpha-keto acids to acyl-CoA and CO(2). It contains multiple copies of three enzymatic components: branched-chain alpha-keto acid decarboxylase (E1), lipoamide acyltransferase (E2) and lipoamide dehydrogenase (E3). Within this complex, the catalytic function of this enzyme is to accept, and to transfer to coenzyme A, acyl groups that are generated by the branched-chain alpha-keto acid decarboxylase component. In Mus musculus (Mouse), this protein is Lipoamide acyltransferase component of branched-chain alpha-keto acid dehydrogenase complex, mitochondrial (Dbt).